The chain runs to 463 residues: MSLIVTRFAPSPTGYLHIGGLRTAIFNYLFARANQGKFFLRIEDTDLSRNSIEAANAIIEAFKWVGLEYDGEILYQSKRFEIYKEYIQKLLDEDKAYYCYMSKYELDALREEQKARKETPRYDNRYRDFKGTPPKGIEPVVRIKVPQNEVIGFNDGVKGEVRVNTNELDDFIIARSDGVPTYNFVVTIDDALMGITDVIRGDDHLSNTPKQIVLYKALNFKIPNFFHVPMILNEEGQKLSKRHGATNVMDYQERGYLKEALVNFLARLGWSYQDKEIFSMQELLECFDPKDLNSSPSCFSWHKLNWLNAHYLKNQSTQELLKLLKPFSFSDLSHLNPAQLDRLLDALKERSQTLKELALKIDEVLTAPIEYEEKVLKKLNQALVMPLLEKFKLELNTTNFNDESALENAMHQIIEEEKIKAGSFMQPLRLALLGKGGGIGLKEALFILGKTESVKRIEKFLKN.

Positions 10–20 match the 'HIGH' region motif; the sequence is PSPTGYLHIGG. Residues 238-242 carry the 'KMSKS' region motif; that stretch reads KLSKR. Position 241 (lysine 241) interacts with ATP.

Belongs to the class-I aminoacyl-tRNA synthetase family. Glutamate--tRNA ligase type 1 subfamily. Monomer.

It is found in the cytoplasm. The enzyme catalyses tRNA(Glu) + L-glutamate + ATP = L-glutamyl-tRNA(Glu) + AMP + diphosphate. Catalyzes the attachment of glutamate to tRNA(Glu) in a two-step reaction: glutamate is first activated by ATP to form Glu-AMP and then transferred to the acceptor end of tRNA(Glu). The polypeptide is Glutamate--tRNA ligase 1 (Helicobacter pylori (strain P12)).